The primary structure comprises 447 residues: Phosphoglucosamine mutase (447 aa).

The active-site Phosphoserine intermediate is the S100. Residues S100, D239, D241, and D243 each coordinate Mg(2+). Residue S100 is modified to Phosphoserine.

It belongs to the phosphohexose mutase family. It depends on Mg(2+) as a cofactor. In terms of processing, activated by phosphorylation.

It carries out the reaction alpha-D-glucosamine 1-phosphate = D-glucosamine 6-phosphate. Catalyzes the conversion of glucosamine-6-phosphate to glucosamine-1-phosphate. The polypeptide is Phosphoglucosamine mutase (Thermoanaerobacter sp. (strain X514)).